The primary structure comprises 712 residues: MENLIPVVNKLQDVFATLGRKEDQIQLPQIVVVGSQSAGKSSVLENLVGRDFLPRGTGIVTRRPLILQLNHVALDDESKRRRSNGTLLTDDWAMFEHTGSKVFTDFDAVRKEIEDETDRVTGVNKGISLLPISLKIYSHRVVSLSLVDLPGITKIPVGDQPVNIEEQIREMILLYISNPSSIILAVTPANQDFATSEPIKLAREVDAGGQRTLAVLTKLDLMDQGTDAMDVLMGKVIPVKLGIIGVVNRSQQNILDNKLIVDAVKDEQSFMQKKYPTLASRNGTPYLAKRLNMLLMHHIRNCLPALKARVSIMNAQCQSDLVAFGEPVEDKNRTLLQIITRFATAYTSTIEGTARNIETTELCGGARICYIFHDTFGRSLESVNPLENLTQLDILTAIRNATGPRPALFVPEVSFELLVKRQIQRLEEPSLRCVELVHEEMQRMVQHCGFTTQQEMIRFPRLYDKINEVVSGVLKERLKPTNELVENLVAIELAYINTKHPEFTEANLVTLLKEELLLDDRHGRSRNRHASTGERAVSAHGEQQLQPVPGVNGVDLNAVLQQQQQQSQNQRASNGFLGLFGNAAASSKTSPQEKQSANFLPEVPETQLGRKLTSREQRDVAIIERLIRNYFIIVRKNIQDSVPKAIMALLVNFVRDNLQSELVRQLYKPDEMDDLLAETEDMAQRRRDTLETMKALQQASVIISEVRETQVW.

Residues Q24–P304 enclose the Dynamin-type G domain. A G1 motif region spans residues G34–S41. The segment at V60–R62 is G2 motif. Residues D148–G151 form a G3 motif region. The tract at residues T217–D220 is G4 motif. Positions V247–S250 are G5 motif. An interaction with caspase ced-9 region spans residues S280–E502. Positions G523–E542 are disordered. Residues V620–V711 form the GED domain.

It belongs to the TRAFAC class dynamin-like GTPase superfamily. Dynamin/Fzo/YdjA family. Interacts (via residues 280-502) with caspase ced-9; the interaction is enhanced by GTP rather than GDP; the interaction is probably direct and may occur at the mitochondrion. Highly expressed in neurons, in intestinal cells and in the body wall, pharyngeal, and vulval muscles.

The protein localises to the mitochondrion. It localises to the mitochondrion outer membrane. The protein resides in the cytoplasm. Its subcellular location is the cytosol. The enzyme catalyses GTP + H2O = GDP + phosphate + H(+). With respect to regulation, GTPase activity is increased by binding to phospholipid membranes. In terms of biological role, functions in mitochondrial division. Functions in peroxisomal division. Mediates membrane fission, perhaps mainly of the mitochondrial outer membrane. Mitochondrial fission may be promoted by recruitment to mitochondrial membranes via the egl-1/ced-9 complex. Involved in the coordination of mitochondrial division with autophagy in response to acute heat stress during larval development. Plays a role in apoptosis by promoting mitochondrial elimination and cell-death execution, acting downstream of caspase ced-3, and perhaps independently of FIS1-related protein fis-2, caspase ced-9 and apoptosis-inducing factor AIFM/wah-1. Role in promoting apoptosis dependent upon cleavage of drp-1 by ced-3. Involved in negatively modulating longevity in concert with the Insulin/IGF-1-like signaling (IIS) mediated pathway. The protein is Dynamin-1-like protein drp-1 of Caenorhabditis elegans.